We begin with the raw amino-acid sequence, 268 residues long: Glucosamine-6-phosphate deaminase (268 aa).

Catalysis depends on D67, which acts as the Proton acceptor; for enolization step. The active-site For ring-opening step is N136. H138 serves as the catalytic Proton acceptor; for ring-opening step. E143 functions as the For ring-opening step in the catalytic mechanism.

The protein belongs to the glucosamine/galactosamine-6-phosphate isomerase family. NagB subfamily. Homohexamer.

It carries out the reaction alpha-D-glucosamine 6-phosphate + H2O = beta-D-fructose 6-phosphate + NH4(+). It functions in the pathway amino-sugar metabolism; N-acetylneuraminate degradation; D-fructose 6-phosphate from N-acetylneuraminate: step 5/5. Catalyzes the reversible isomerization-deamination of glucosamine 6-phosphate (GlcN6P) to form fructose 6-phosphate (Fru6P) and ammonium ion. This is Glucosamine-6-phosphate deaminase from Shewanella loihica (strain ATCC BAA-1088 / PV-4).